A 383-amino-acid chain; its full sequence is Probable lipid transporter atnI (383 aa).

Helical transmembrane passes span 46–66 (VLFS…AIMF) and 71–91 (AWVV…RSLF). Residue asparagine 94 is glycosylated (N-linked (GlcNAc...) asparagine). 5 helical membrane-spanning segments follow: residues 104-124 (FTIF…MTLG), 144-164 (FGHI…VGAA), 182-202 (IYMG…GLFI), 231-251 (WLFY…IFRL), and 269-289 (WFEY…LNVA). Residues 305 to 383 (VSRKEKKQRK…YDNRGNEVRP (79 aa)) form a disordered region. Positions 307–316 (RKEKKQRKRE) are enriched in basic residues. A compositionally biased stretch (basic and acidic residues) spans 317-329 (KKEAKIAEKEAKK).

This sequence belongs to the lipid-translocating exporter (LTE) (TC 9.A.26.1) family.

The protein localises to the membrane. It participates in secondary metabolite biosynthesis. Its function is as follows. Probable lipid transporter; part of the gene cluster that mediates the biosynthesis of aspercryptins, linear lipopeptides built from six amino acids including 2 highly unusual and nonproteogenic amino acids, 2-amino-octanoic acid (2aoa) and 2-amino-dodecanol (2adol). The core structure of aspercryptins is as follows: Ser/Ala-Thr-Ile/Val-2aoa-Asn-2adol. The first step of aspercryptin biosynthesis is the generation of the fatty acid precursors, octanoic and dodecanoic acids, by the FAS subunits atnF and atnM. The fatty acid precursors are likely transformed into the corresponding alpha-amino fatty acids in three steps. First, they are hydroxylated by the cytochrome P450 monooxygenase atnE, then oxidized to the corresponding alpha-keto acids by the NAD(P)-dependent oxidoreductase atnD, and finally converted to the alpha-amino fatty acids by the PLP-dependent aminotransferases atnH or atnJ. the alpha-amino fatty acids, 2-amino-octanoic and 2-amino-dodecanoic acids, are recognized, activated, and covalently tethered to the NRPS atnA by its fourth and sixth adenylation domains. The second module of atnA is the Thr module and contains an epimerase (E) domain responsible for the epimerization of Thr to D-allo-Thr. Additionally, despite atnA having only one epimerase domain, the first amino acid of aspercryptin A1 is D-Ser, suggesting that serine is either loaded directly as D-Ser on the first module or that the epimerase domain in the threonine module epimerizes both L-Ser and L-Thr. After condensation of the hexapeptide of aspercryptin, the C-terminal reductase (TE) domain might be involved in the reductive release and production of the aldehyde hexapeptide. Further reduction would generate aspercryptins. The variety of aspercryptins produced reflects the flexibility of the atnA NRPS, allowing incorporation of alanine instead of serine, valine for isoleucine, and a C10 fatty amino alcohol instead of the C12 version. AtnB seems to be involved in the selectivity for Ile versus Val by the third module. Moreover, type B, C and D aspercryptins have an additional N-terminal cichorine, acetyl and propionyl group respectively. The polypeptide is Probable lipid transporter atnI (Emericella nidulans (strain FGSC A4 / ATCC 38163 / CBS 112.46 / NRRL 194 / M139) (Aspergillus nidulans)).